We begin with the raw amino-acid sequence, 416 residues long: Formyl-CoA:oxalate CoA-transferase (416 aa).

CoA contacts are provided by residues 17 to 18 (QS), arginine 38, 72 to 75 (LNTK), 96 to 98 (NFH), histidine 104, and 137 to 140 (KAYE). Aspartate 169 acts as the Nucleophile in catalysis. Position 248–250 (248–250 (GGQ)) interacts with substrate. 273–275 (QEQ) is a CoA binding site.

The protein belongs to the CoA-transferase III family. Frc subfamily. As to quaternary structure, homodimer.

It catalyses the reaction formyl-CoA + oxalate = oxalyl-CoA + formate. The protein operates within metabolic intermediate degradation; oxalate degradation; CO(2) and formate from oxalate: step 1/2. Involved in the catabolism of oxalate and in the adapatation to low pH via the induction of the oxalate-dependent acid tolerance response (ATR). Catalyzes the transfer of the CoA moiety from formyl-CoA to oxalate. This is Formyl-CoA:oxalate CoA-transferase from Escherichia coli (strain ATCC 8739 / DSM 1576 / NBRC 3972 / NCIMB 8545 / WDCM 00012 / Crooks).